The chain runs to 121 residues: Large ribosomal subunit protein bL12 (121 aa).

This sequence belongs to the bacterial ribosomal protein bL12 family. As to quaternary structure, homodimer. Part of the ribosomal stalk of the 50S ribosomal subunit. Forms a multimeric L10(L12)X complex, where L10 forms an elongated spine to which 2 to 4 L12 dimers bind in a sequential fashion. Binds GTP-bound translation factors.

Forms part of the ribosomal stalk which helps the ribosome interact with GTP-bound translation factors. Is thus essential for accurate translation. The sequence is that of Large ribosomal subunit protein bL12 from Ureaplasma parvum serovar 3 (strain ATCC 27815 / 27 / NCTC 11736).